A 336-amino-acid chain; its full sequence is Holliday junction branch migration complex subunit RuvB (336 aa).

A large ATPase domain (RuvB-L) region spans residues 1–182 (MKERIVNLET…FGMSFRMQFY (182 aa)). ATP is bound by residues Leu-21, Arg-22, Gly-63, Lys-66, Thr-67, Ser-68, 129–131 (EDF), Arg-172, Tyr-182, and Arg-219. Thr-67 lines the Mg(2+) pocket. The segment at 183–253 (SPSELSLIIK…ITLHALNELG (71 aa)) is small ATPAse domain (RuvB-S). The head domain (RuvB-H) stretch occupies residues 256–336 (ELGFDEADLA…IPTLNPQTLF (81 aa)). The DNA site is built by Arg-310 and Arg-315.

It belongs to the RuvB family. As to quaternary structure, homohexamer. Forms an RuvA(8)-RuvB(12)-Holliday junction (HJ) complex. HJ DNA is sandwiched between 2 RuvA tetramers; dsDNA enters through RuvA and exits via RuvB. An RuvB hexamer assembles on each DNA strand where it exits the tetramer. Each RuvB hexamer is contacted by two RuvA subunits (via domain III) on 2 adjacent RuvB subunits; this complex drives branch migration. In the full resolvosome a probable DNA-RuvA(4)-RuvB(12)-RuvC(2) complex forms which resolves the HJ.

The protein resides in the cytoplasm. The catalysed reaction is ATP + H2O = ADP + phosphate + H(+). The RuvA-RuvB-RuvC complex processes Holliday junction (HJ) DNA during genetic recombination and DNA repair, while the RuvA-RuvB complex plays an important role in the rescue of blocked DNA replication forks via replication fork reversal (RFR). RuvA specifically binds to HJ cruciform DNA, conferring on it an open structure. The RuvB hexamer acts as an ATP-dependent pump, pulling dsDNA into and through the RuvAB complex. RuvB forms 2 homohexamers on either side of HJ DNA bound by 1 or 2 RuvA tetramers; 4 subunits per hexamer contact DNA at a time. Coordinated motions by a converter formed by DNA-disengaged RuvB subunits stimulates ATP hydrolysis and nucleotide exchange. Immobilization of the converter enables RuvB to convert the ATP-contained energy into a lever motion, pulling 2 nucleotides of DNA out of the RuvA tetramer per ATP hydrolyzed, thus driving DNA branch migration. The RuvB motors rotate together with the DNA substrate, which together with the progressing nucleotide cycle form the mechanistic basis for DNA recombination by continuous HJ branch migration. Branch migration allows RuvC to scan DNA until it finds its consensus sequence, where it cleaves and resolves cruciform DNA. The sequence is that of Holliday junction branch migration complex subunit RuvB from Helicobacter pylori (strain P12).